The following is a 317-amino-acid chain: Putative HTH-type transcriptional regulatory protein NP_1320A (317 aa).

One can recognise an HTH cro/C1-type domain in the interval 132-189; that stretch reads LSDIRSQEDMSLGKLANELGVSRRTVSKYEDGMSASVEVAAELEEIFDRKLASPVEVL. Positions 143-162 form a DNA-binding region, H-T-H motif; that stretch reads LGKLANELGVSRRTVSKYED.

In Natronomonas pharaonis (strain ATCC 35678 / DSM 2160 / CIP 103997 / JCM 8858 / NBRC 14720 / NCIMB 2260 / Gabara) (Halobacterium pharaonis), this protein is Putative HTH-type transcriptional regulatory protein NP_1320A.